We begin with the raw amino-acid sequence, 492 residues long: GMP reductase (492 aa).

NADP(+) is bound by residues 30–31 (SR) and arginine 78. 2 CBS domains span residues 99 to 162 (LIED…LVET) and 164 to 223 (MTPV…RNAT). NADP(+) contacts are provided by residues 260 to 262 (DIA) and 313 to 314 (VG). Residues glycine 314, glycine 316, and cysteine 319 each contribute to the K(+) site. Residue cysteine 319 is the Thioimidate intermediate of the active site. Threonine 321 serves as the catalytic Proton donor/acceptor. Arginine 322 serves as a coordination point for K(+). GMP-binding positions include 352–354 (DGG), 375–376 (GN), and 401–403 (GMA). Residues methionine 402 and 454–457 (SGIS) contribute to the NADP(+) site. Positions 490–492 (SKL) match the Microbody targeting signal motif.

The protein belongs to the IMPDH/GMPR family. GuaC type 1 subfamily. Homotetramer.

It localises to the glycosome. The enzyme catalyses IMP + NH4(+) + NADP(+) = GMP + NADPH + 2 H(+). Its activity is regulated as follows. Activated by GTP and inhibited by XMP and the IMP analogs allopurinol nucleotide and thiopurinol nucleotide. In terms of biological role, catalyzes the irreversible NADPH-dependent deamination of GMP to IMP. It functions in the conversion of nucleobase, nucleoside and nucleotide derivatives of G to A nucleotides, and in maintaining the intracellular balance of A and G nucleotides. In Leishmania donovani, this protein is GMP reductase.